The primary structure comprises 93 residues: Long neurotoxin 2 (93 aa).

Positions 1–21 (MKILLLTLVVVTIVCLDLAYT) are cleaved as a signal peptide. Cystine bridges form between Cys24–Cys42, Cys35–Cys63, Cys48–Cys52, Cys67–Cys78, and Cys79–Cys84.

It belongs to the three-finger toxin family. Long-chain subfamily. Type II alpha-neurotoxin sub-subfamily. As to expression, expressed by the venom gland.

Its subcellular location is the secreted. Binds with high affinity to muscular (alpha-1/CHRNA1) and neuronal (alpha-7/CHRNA7) nicotinic acetylcholine receptor (nAChR) and inhibits acetylcholine from binding to the receptor, thereby impairing neuromuscular and neuronal transmission. The polypeptide is Long neurotoxin 2 (Hydrophis hardwickii (Hardwick's spine-bellied seasnake)).